A 355-amino-acid polypeptide reads, in one-letter code: Cyclic nucleotide-gated potassium channel RHE_CH03180 (355 aa).

The Cytoplasmic segment spans residues 1 to 12 (MSAVPFSKISTP). Residues 13-30 (LNALFATIGLLVVAALTT) traverse the membrane as a helical segment. Over 31–38 (QGLTGQER) the chain is Periplasmic. The chain crosses the membrane as a helical span at residues 39-61 (LVFELLLAAIWLAYVLQLSGTLL). The Cytoplasmic segment spans residues 62 to 73 (SRRRRLSGEMTA). Residues 74–93 (LVIDLLAVLVPAAAFLFVGS) traverse the membrane as a helical segment. The chain crosses the membrane as a helical span at residues 94-111 (RDRDLYCAIWLLKPLRDS). The Cytoplasmic portion of the chain corresponds to 112 to 128 (TFFRLLAKVVANESRNL). A helical transmembrane segment spans residues 129–149 (LGVTSVFGIVLFGAALAGYII). Over 150 to 160 (ERDVQPDKFGS) the chain is Periplasmic. The segment at residues 161–179 (IPQAMWWAVVTLSTTGYGD) is an intramembrane region (pore-forming). Residues 174-179 (TTGYGD) carry the Selectivity filter motif. Topologically, residues 180–184 (EIPQS) are periplasmic. The chain crosses the membrane as a helical span at residues 185 to 209 (LAGRVLAGLVMMSGIGIFALWAGIL). Residues 210–355 (ATGFYEEVRR…LERRGGPPKE (146 aa)) are Cytoplasmic-facing. 3',5'-cyclic AMP contacts are provided by residues 297–298 (GE), 307–308 (RS), and arginine 348.

It belongs to the potassium channel family. In terms of assembly, homotetramer.

The protein localises to the cell membrane. In terms of biological role, cyclic nucleotide-regulated potassium channel activated by cAMP. The polypeptide is Cyclic nucleotide-gated potassium channel RHE_CH03180 (Rhizobium etli (strain ATCC 51251 / DSM 11541 / JCM 21823 / NBRC 15573 / CFN 42)).